Consider the following 427-residue polypeptide: 3-phosphoshikimate 1-carboxyvinyltransferase (427 aa).

3-phosphoshikimate contacts are provided by K20, S21, and R25. K20 lines the phosphoenolpyruvate pocket. The phosphoenolpyruvate site is built by G92 and R120. The 3-phosphoshikimate site is built by S166, Q168, D312, and K339. Q168 is a binding site for phosphoenolpyruvate. Catalysis depends on D312, which acts as the Proton acceptor. Positions 343 and 385 each coordinate phosphoenolpyruvate.

This sequence belongs to the EPSP synthase family. In terms of assembly, monomer.

It localises to the cytoplasm. The catalysed reaction is 3-phosphoshikimate + phosphoenolpyruvate = 5-O-(1-carboxyvinyl)-3-phosphoshikimate + phosphate. Its pathway is metabolic intermediate biosynthesis; chorismate biosynthesis; chorismate from D-erythrose 4-phosphate and phosphoenolpyruvate: step 6/7. Its function is as follows. Catalyzes the transfer of the enolpyruvyl moiety of phosphoenolpyruvate (PEP) to the 5-hydroxyl of shikimate-3-phosphate (S3P) to produce enolpyruvyl shikimate-3-phosphate and inorganic phosphate. This is 3-phosphoshikimate 1-carboxyvinyltransferase from Streptococcus agalactiae serotype Ia (strain ATCC 27591 / A909 / CDC SS700).